The following is a 692-amino-acid chain: Polyphosphate kinase (692 aa).

Asparagine 57 is an ATP binding site. Mg(2+) is bound by residues arginine 383 and arginine 413. Residue histidine 443 is the Phosphohistidine intermediate of the active site. ATP-binding residues include tyrosine 476, arginine 572, and histidine 600.

Belongs to the polyphosphate kinase 1 (PPK1) family. Requires Mg(2+) as cofactor. In terms of processing, an intermediate of this reaction is the autophosphorylated ppk in which a phosphate is covalently linked to a histidine residue through a N-P bond.

It catalyses the reaction [phosphate](n) + ATP = [phosphate](n+1) + ADP. Catalyzes the reversible transfer of the terminal phosphate of ATP to form a long-chain polyphosphate (polyP). The protein is Polyphosphate kinase of Acinetobacter baumannii (strain AYE).